We begin with the raw amino-acid sequence, 511 residues long: MSGVWGAGGPRCQAALAVLASLCRARPPPLGLDVETCRSFELQSPEQSPSAADSGTSVSLLAVVVIVCGVALVAVFLFLFWKLCWMPWRKKEASSPSSANPASETLQSPSSRGNMADKLKDPSALGFLEAAVKISHTSPDIPAEVQMSVKEHIMRHTKLQRQTTEPASSTRHTSFKRHLPRQMHVSSVDYGNELPPAAAEQPTSIGRIKPELYKQKSVDGDDAKSEAAKSCGKINFSLRYDYESETLIVRILKAFDLPAKDFCGSSDPYVKIYLLPDRKCKLQTRVHRKTLNPTFDENFHFPVPYEELADRKLHLSVFDFDRFSRHDMIGEVILDNLFEASDLSRETSIWKDIQYATSESVDLGEIMFSLCYLPTAGRLTLTVIKCRNLKAMDITGYSDPYVKVSLLCDGRRLKKKKTTIKKNTLNPIYNEAIIFDIPPENMDQVSLLISVMDYDRVGHNEIIGVCRVGINAEGLGRDHWNEMLAYPRKPIAHWHSLVEVKKSFKEGTPRL.

Topologically, residues 1-59 (MSGVWGAGGPRCQAALAVLASLCRARPPPLGLDVETCRSFELQSPEQSPSAADSGTSVS) are vesicular. The segment at 12 to 38 (CQAALAVLASLCRARPPPLGLDVETCR) is cysteine motif. Residues 60 to 80 (LLAVVVIVCGVALVAVFLFLF) form a helical membrane-spanning segment. Topologically, residues 81 to 511 (WKLCWMPWRK…KSFKEGTPRL (431 aa)) are cytoplasmic. Disordered regions lie at residues 92 to 119 (EASS…ADKL) and 157 to 182 (TKLQ…LPRQ). The span at 94 to 103 (SSPSSANPAS) shows a compositional bias: low complexity. Composition is skewed to polar residues over residues 104-113 (ETLQSPSSRG) and 160-172 (QRQT…STRH). Serine 217 bears the Phosphoserine mark. 2 consecutive C2 domains span residues 230–351 (SCGK…SIWK) and 362–495 (DLGE…AHWH). Aspartate 261, aspartate 267, aspartate 319, phenylalanine 320, aspartate 321, serine 324, aspartate 327, aspartate 393, aspartate 399, aspartate 453, and aspartate 455 together coordinate Ca(2+). The segment at 483 to 511 (MLAYPRKPIAHWHSLVEVKKSFKEGTPRL) is necessary for cell membrane association (isoform 2).

It belongs to the synaptotagmin family. As to quaternary structure, isoform 1: Homodimer; disulfide-linked via the cysteine motif. Isoform 1: Can also form heterodimers with SYT3, SYT7, SYT9 and SYT10. Isoform 1: Interacts with STX1A, STX1B and STX2; the interaction is Ca(2+)-dependent. Isoform 2: Is not able to form homodimer and heterodimers. Requires Ca(2+) as cofactor. As to expression, isoform 1 is expressed in the olfactory bulb. Isoform 2 is expressed in the brain (at protein level).

It is found in the cytoplasmic vesicle. The protein resides in the secretory vesicle. It localises to the synaptic vesicle membrane. Its subcellular location is the membrane. The protein localises to the cytoplasm. It is found in the cytosol. The protein resides in the cell membrane. In terms of biological role, may be involved in Ca(2+)-dependent exocytosis of secretory vesicles through Ca(2+) and phospholipid binding to the C2 domain or may serve as Ca(2+) sensors in the process of vesicular trafficking and exocytosis. May mediate Ca(2+)-regulation of exocytosis in acrosomal reaction in sperm. This Mus musculus (Mouse) protein is Synaptotagmin-6 (Syt6).